The sequence spans 402 residues: Diaminopimelate decarboxylase (402 aa).

An N6-(pyridoxal phosphate)lysine modification is found at Lys61. Pyridoxal 5'-phosphate is bound by residues Gly233 and 269-272 (EPGR). Substrate contacts are provided by Arg272, Arg304, Tyr308, Glu334, and Tyr360. Tyr360 is a binding site for pyridoxal 5'-phosphate.

This sequence belongs to the Orn/Lys/Arg decarboxylase class-II family. LysA subfamily. In terms of assembly, homodimer. Pyridoxal 5'-phosphate is required as a cofactor.

The enzyme catalyses meso-2,6-diaminopimelate + H(+) = L-lysine + CO2. It participates in amino-acid biosynthesis; L-lysine biosynthesis via DAP pathway; L-lysine from DL-2,6-diaminopimelate: step 1/1. Specifically catalyzes the decarboxylation of meso-diaminopimelate (meso-DAP) to L-lysine. The chain is Diaminopimelate decarboxylase from Thermoplasma acidophilum (strain ATCC 25905 / DSM 1728 / JCM 9062 / NBRC 15155 / AMRC-C165).